Here is a 157-residue protein sequence, read N- to C-terminus: Ribosomal RNA large subunit methyltransferase H (157 aa).

Residues L74, G106, and 125 to 130 contribute to the S-adenosyl-L-methionine site; that span reads LSDMTL.

This sequence belongs to the RNA methyltransferase RlmH family. Homodimer.

Its subcellular location is the cytoplasm. The catalysed reaction is pseudouridine(1915) in 23S rRNA + S-adenosyl-L-methionine = N(3)-methylpseudouridine(1915) in 23S rRNA + S-adenosyl-L-homocysteine + H(+). Its function is as follows. Specifically methylates the pseudouridine at position 1915 (m3Psi1915) in 23S rRNA. The protein is Ribosomal RNA large subunit methyltransferase H of Desulfovibrio desulfuricans (strain ATCC 27774 / DSM 6949 / MB).